Consider the following 237-residue polypeptide: Phosphoribosylaminoimidazole-succinocarboxamide synthase (237 aa).

It belongs to the SAICAR synthetase family.

The catalysed reaction is 5-amino-1-(5-phospho-D-ribosyl)imidazole-4-carboxylate + L-aspartate + ATP = (2S)-2-[5-amino-1-(5-phospho-beta-D-ribosyl)imidazole-4-carboxamido]succinate + ADP + phosphate + 2 H(+). The protein operates within purine metabolism; IMP biosynthesis via de novo pathway; 5-amino-1-(5-phospho-D-ribosyl)imidazole-4-carboxamide from 5-amino-1-(5-phospho-D-ribosyl)imidazole-4-carboxylate: step 1/2. This is Phosphoribosylaminoimidazole-succinocarboxamide synthase from Deinococcus radiodurans (strain ATCC 13939 / DSM 20539 / JCM 16871 / CCUG 27074 / LMG 4051 / NBRC 15346 / NCIMB 9279 / VKM B-1422 / R1).